Here is a 186-residue protein sequence, read N- to C-terminus: MARKENRDRDREERDSEFVDKLVHINRVAKVVKGGRRFGFAALVVVGDQKGRVGFGHGKAREVPEAIRKATEAAKRAMIRVPLREGRTLHHDVDGRHGAGRVVLRAAPPGTGIIAGGPMRAVFETLGVQDVVAKSLGSSNPYNMVRATFDALKNEQSPRMVAARRGKKVSEIVGRRSDAAAEAGLE.

The S5 DRBM domain occupies 18–81 (FVDKLVHINR…EAAKRAMIRV (64 aa)).

It belongs to the universal ribosomal protein uS5 family. In terms of assembly, part of the 30S ribosomal subunit. Contacts proteins S4 and S8.

Its function is as follows. With S4 and S12 plays an important role in translational accuracy. In terms of biological role, located at the back of the 30S subunit body where it stabilizes the conformation of the head with respect to the body. This is Small ribosomal subunit protein uS5 from Parvibaculum lavamentivorans (strain DS-1 / DSM 13023 / NCIMB 13966).